A 171-amino-acid chain; its full sequence is MARPAPWWWLRPLAALALALALVRVPSARAGQMPRPAERGPPVRLFTEEELARYSGEEEDQPIYLAVKGVVFDVTSGKEFYGRGAPYNALAGKDSSRGVAKMSLDPADLTHDISGLTAKELEALDDIFSKVYKAKYPIVGYTARRILNEDGSPNLDFKPEDQPHFDIKDEF.

A signal peptide spans 1-30; that stretch reads MARPAPWWWLRPLAALALALALVRVPSARA. A Cytochrome b5 heme-binding domain is found at 43–128; it reads VRLFTEEELA…KELEALDDIF (86 aa). Residue Lys-135 is modified to N6-acetyllysine. A disordered region spans residues 151-171; that stretch reads GSPNLDFKPEDQPHFDIKDEF. Basic and acidic residues predominate over residues 157–171; it reads FKPEDQPHFDIKDEF.

It belongs to the cytochrome b5 family. MAPR subfamily. As to quaternary structure, interacts with PINK1 and PARK7.

Its subcellular location is the secreted. It is found in the extracellular space. It localises to the mitochondrion. The protein localises to the endoplasmic reticulum. In terms of biological role, acts as a neurotrophic factor in postnatal mature neurons enhancing neuronal survival. Promotes cell proliferation and neurogenesis in undifferentiated neural progenitor cells at the embryonic stage and inhibits differentiation of astrocytes. Its neurotrophic activity is exerted via MAPK1/ERK2, MAPK3/ERK1 and AKT1/AKT pathways. Neurotrophic activity is enhanced by binding to heme. Also acts as an anorexigenic neurotrophic factor that contributes to energy balance. The chain is Neudesin from Rattus norvegicus (Rat).